Consider the following 371-residue polypeptide: N-acetyldiaminopimelate deacetylase (371 aa).

The active site involves aspartate 68. Residue glutamate 127 is the Proton acceptor of the active site.

The protein belongs to the peptidase M20A family. N-acetyldiaminopimelate deacetylase subfamily.

The catalysed reaction is N-acetyl-(2S,6S)-2,6-diaminopimelate + H2O = (2S,6S)-2,6-diaminopimelate + acetate. The protein operates within amino-acid biosynthesis; L-lysine biosynthesis via DAP pathway; LL-2,6-diaminopimelate from (S)-tetrahydrodipicolinate (acetylase route): step 3/3. Catalyzes the conversion of N-acetyl-diaminopimelate to diaminopimelate and acetate. In Listeria monocytogenes serovar 1/2a (strain ATCC BAA-679 / EGD-e), this protein is N-acetyldiaminopimelate deacetylase.